Consider the following 550-residue polypeptide: MPKEKYDPPDPRRIYTIMSAEEVANGKKSRWDELEISGRVRSLSMSLWSLTHLTVLHLSDNNLSRIPPDIAKLHNLVYLDLSSNKLRSLPAELGNVVSLRELLLNNNLLRVLPFELGRLFRLQTLGLKGNPLSQDILGLYQEPDGMRKLLNYMLDNLSVHPEQLPQRPWITLKERDQILPSVPFTVMCFNVLCDKYATRQLYGYCPSWALNWEYRKKGIMEEIVSCDADIISLQEVETEQYYTLFMPALKERGYDGFFSPKSRAKIMSDQEKKHVDGCAIFFRTEKFSLVQKHTVEFNQIAMANSEGSEAMLNRVMTKDNIGVSVLLEVHTDFSGAGMKPHHSSEKQLLMVANAHMHWDPEYSDVKLIQTMMFVSELKSIIEKAASRPGSPTPDSNSIPFVLCADLNSLPDSGVVEYLTNGGVADNHKDFKELRYNECLTNFSCNGKNGTPDGRITHGFQLRSAYENNLMPYTNYTFDFKGVIDYIFYSKTHIDVLGVLGPLDPQWMMDNNIAGCPHPHIPSDHFSLLTQLELHPPFLPVINGVHLPSRR.

Positions 1-148 (MPKEKYDPPD…LYQEPDGMRK (148 aa)) are required for interaction with cnot1, cnot3 and cnot7. 4 LRR repeats span residues 52–73 (HLTV…IAKL), 75–96 (NLVY…LGNV), 98–120 (SLRE…GRLF), and 121–143 (RLQT…YQEP). The interval 153-550 (MLDNLSVHPE…INGVHLPSRR (398 aa)) is nuclease domain. A Mg(2+)-binding site is contributed by Glu235. Substrate is bound by residues Glu235, Glu271, His355, and Pro360. Asp405 serves as a coordination point for Mg(2+). The Proton donor/acceptor role is filled by Asp405. Substrate is bound by residues Asn407, Asn474, and Phe479.

This sequence belongs to the CCR4/nocturin family. As to quaternary structure, component of the CCR4-NOT complex. Mg(2+) is required as a cofactor.

It is found in the cytoplasm. The protein resides in the nucleus. The catalysed reaction is Exonucleolytic cleavage of poly(A) to 5'-AMP.. Its function is as follows. Poly(A) nuclease with 3'-5' RNase activity. Catalytic component of the CCR4-NOT complex which is one of the major cellular mRNA deadenylases and is linked to various cellular processes including bulk mRNA degradation, miRNA-mediated repression, translational repression during translational initiation and general transcription regulation. Additional complex functions may be a consequence of its influence on mRNA expression. The polypeptide is CCR4-NOT transcription complex subunit 6-like-B (cnot6l-b) (Xenopus laevis (African clawed frog)).